The chain runs to 605 residues: Apoptosis-inducing factor 3 (605 aa).

Residues 18 to 29 show a composition bias toward basic and acidic residues; that stretch reads VLPEKERGKEEL. The tract at residues 18–44 is disordered; it reads VLPEKERGKEELSASGKGSPRGYQGNG. The Rieske domain occupies 70–165; that stretch reads ATVCHVKDLE…VKIEKEKVTI (96 aa). [2Fe-2S] cluster is bound by residues C109, H111, C128, and H131. FAD contacts are provided by residues 201–205, R235, K240, V270, D467, and W514; that span reads GAGAA.

It belongs to the FAD-dependent oxidoreductase family.

It is found in the mitochondrion. Its function is as follows. Induces apoptosis through a caspase dependent pathway. Reduces mitochondrial membrane potential. The polypeptide is Apoptosis-inducing factor 3 (Aifm3) (Mus musculus (Mouse)).